Consider the following 1509-residue polypeptide: DNA-directed RNA polymerase subunit beta' (1509 aa).

Positions 75, 77, 90, and 93 each coordinate Zn(2+). Residues aspartate 474, aspartate 476, and aspartate 478 each coordinate Mg(2+). 4 residues coordinate Zn(2+): cysteine 804, cysteine 878, cysteine 885, and cysteine 888.

The protein belongs to the RNA polymerase beta' chain family. In terms of assembly, the RNAP catalytic core consists of 2 alpha, 1 beta, 1 beta' and 1 omega subunit. When a sigma factor is associated with the core the holoenzyme is formed, which can initiate transcription. It depends on Mg(2+) as a cofactor. The cofactor is Zn(2+).

It catalyses the reaction RNA(n) + a ribonucleoside 5'-triphosphate = RNA(n+1) + diphosphate. In terms of biological role, DNA-dependent RNA polymerase catalyzes the transcription of DNA into RNA using the four ribonucleoside triphosphates as substrates. The polypeptide is DNA-directed RNA polymerase subunit beta' (Sulfurovum sp. (strain NBC37-1)).